The primary structure comprises 215 residues: MNIILMGLPGAGKGTQASEIVKKFPIPHISTGDMFRKAIKEETELGKEAKSYMDRGELVPDEVTVGIVKERISEDDAKKGFLLDGFPRTIEQAEALNNIMSELDRNIDAVINIEVPEEELMNRLTGRRICESCGTTYHLVFNPPKVEGICDIDGGKLYQREDDNPETVANRLSVNIKQSKPILDFYDQKGVLKNIDGSKDISDVTKDVIDILDHL.

An ATP-binding site is contributed by 10 to 15 (GAGKGT). Positions 30–59 (STGDMFRKAIKEETELGKEAKSYMDRGELV) are NMP. Residues threonine 31, arginine 36, 57–59 (ELV), 85–88 (GFPR), and glutamine 92 contribute to the AMP site. The interval 126–163 (GRRICESCGTTYHLVFNPPKVEGICDIDGGKLYQREDD) is LID. Residue arginine 127 participates in ATP binding. Positions 130 and 133 each coordinate Zn(2+). An ATP-binding site is contributed by 136–137 (TY). Cysteine 150 and aspartate 153 together coordinate Zn(2+). AMP contacts are provided by arginine 160 and arginine 171. Lysine 199 contacts ATP.

This sequence belongs to the adenylate kinase family. Monomer.

The protein localises to the cytoplasm. The catalysed reaction is AMP + ATP = 2 ADP. It functions in the pathway purine metabolism; AMP biosynthesis via salvage pathway; AMP from ADP: step 1/1. Its function is as follows. Catalyzes the reversible transfer of the terminal phosphate group between ATP and AMP. Plays an important role in cellular energy homeostasis and in adenine nucleotide metabolism. In Staphylococcus aureus (strain COL), this protein is Adenylate kinase.